The sequence spans 357 residues: Holliday junction branch migration complex subunit RuvB (357 aa).

The interval M1 to I20 is disordered. The segment at M1 to Y185 is large ATPase domain (RuvB-L). ATP contacts are provided by residues L24, R25, G66, K69, T70, S71, E132–F134, R175, Y185, and R222. T70 contributes to the Mg(2+) binding site. The interval E186–D256 is small ATPAse domain (RuvB-S). Residues T259–D357 are head domain (RuvB-H). Residues R314 and R319 each contribute to the DNA site.

Belongs to the RuvB family. Homohexamer. Forms an RuvA(8)-RuvB(12)-Holliday junction (HJ) complex. HJ DNA is sandwiched between 2 RuvA tetramers; dsDNA enters through RuvA and exits via RuvB. An RuvB hexamer assembles on each DNA strand where it exits the tetramer. Each RuvB hexamer is contacted by two RuvA subunits (via domain III) on 2 adjacent RuvB subunits; this complex drives branch migration. In the full resolvosome a probable DNA-RuvA(4)-RuvB(12)-RuvC(2) complex forms which resolves the HJ.

It is found in the cytoplasm. It carries out the reaction ATP + H2O = ADP + phosphate + H(+). Its function is as follows. The RuvA-RuvB-RuvC complex processes Holliday junction (HJ) DNA during genetic recombination and DNA repair, while the RuvA-RuvB complex plays an important role in the rescue of blocked DNA replication forks via replication fork reversal (RFR). RuvA specifically binds to HJ cruciform DNA, conferring on it an open structure. The RuvB hexamer acts as an ATP-dependent pump, pulling dsDNA into and through the RuvAB complex. RuvB forms 2 homohexamers on either side of HJ DNA bound by 1 or 2 RuvA tetramers; 4 subunits per hexamer contact DNA at a time. Coordinated motions by a converter formed by DNA-disengaged RuvB subunits stimulates ATP hydrolysis and nucleotide exchange. Immobilization of the converter enables RuvB to convert the ATP-contained energy into a lever motion, pulling 2 nucleotides of DNA out of the RuvA tetramer per ATP hydrolyzed, thus driving DNA branch migration. The RuvB motors rotate together with the DNA substrate, which together with the progressing nucleotide cycle form the mechanistic basis for DNA recombination by continuous HJ branch migration. Branch migration allows RuvC to scan DNA until it finds its consensus sequence, where it cleaves and resolves cruciform DNA. The protein is Holliday junction branch migration complex subunit RuvB of Nocardia farcinica (strain IFM 10152).